Consider the following 262-residue polypeptide: Small ribosomal subunit protein uS2 (262 aa).

Belongs to the universal ribosomal protein uS2 family.

The sequence is that of Small ribosomal subunit protein uS2 from Rhodospirillum rubrum (strain ATCC 11170 / ATH 1.1.1 / DSM 467 / LMG 4362 / NCIMB 8255 / S1).